The chain runs to 1070 residues: DNA-directed RNA polymerase subunit beta (1070 aa).

Belongs to the RNA polymerase beta chain family. In terms of assembly, in plastids the minimal PEP RNA polymerase catalytic core is composed of four subunits: alpha, beta, beta', and beta''. When a (nuclear-encoded) sigma factor is associated with the core the holoenzyme is formed, which can initiate transcription.

Its subcellular location is the plastid. It localises to the chloroplast. It catalyses the reaction RNA(n) + a ribonucleoside 5'-triphosphate = RNA(n+1) + diphosphate. DNA-dependent RNA polymerase catalyzes the transcription of DNA into RNA using the four ribonucleoside triphosphates as substrates. This is DNA-directed RNA polymerase subunit beta from Populus trichocarpa (Western balsam poplar).